The chain runs to 241 residues: Orotidine 5'-phosphate decarboxylase (241 aa).

Residues Asp15, Lys36, 63-72 (DLKFHDIPNT), Thr127, Arg189, Gln198, Gly218, and Arg219 each bind substrate. Lys65 acts as the Proton donor in catalysis.

This sequence belongs to the OMP decarboxylase family. Type 1 subfamily. Homodimer.

The catalysed reaction is orotidine 5'-phosphate + H(+) = UMP + CO2. The protein operates within pyrimidine metabolism; UMP biosynthesis via de novo pathway; UMP from orotate: step 2/2. Functionally, catalyzes the decarboxylation of orotidine 5'-monophosphate (OMP) to uridine 5'-monophosphate (UMP). The polypeptide is Orotidine 5'-phosphate decarboxylase (Prochlorococcus marinus (strain MIT 9211)).